A 330-amino-acid polypeptide reads, in one-letter code: MKNLKFIKPFFVEEIDENPISGKFTIKPLERGYGITVGNALRRVLLSSLPGAAIVNVKIQGVEQEFTTIPGVYEDVMTIILNLKKIVFAVDDESDDFEEKLELIAKGPQRLTAASFELPAGVKIINPDHYITTLSDDVCFHMTVTIKKGIGYVGAKENKVHIENQVGVIAIDSLFTPVVNVSYQVEKKLGNKDELTIEITTNGALLAKEALATAASILVDHFNVLVELSQKPAHVEFVSESKKEAHNYVLDLEIEQLDLSVRLFNSLKRAGIDTVASLVKLSEKEVVKLKSLGRKSFQELKDKFLEYGLEFNDYLKEALHHSVEEDKDKH.

The tract at residues 1-229 is alpha N-terminal domain (alpha-NTD); the sequence is MKNLKFIKPF…DHFNVLVELS (229 aa). Residues 245–330 form an alpha C-terminal domain (alpha-CTD) region; it reads AHNYVLDLEI…HSVEEDKDKH (86 aa).

Belongs to the RNA polymerase alpha chain family. In terms of assembly, homodimer. The RNAP catalytic core consists of 2 alpha, 1 beta, 1 beta' and 1 omega subunit. When a sigma factor is associated with the core the holoenzyme is formed, which can initiate transcription.

It catalyses the reaction RNA(n) + a ribonucleoside 5'-triphosphate = RNA(n+1) + diphosphate. Functionally, DNA-dependent RNA polymerase catalyzes the transcription of DNA into RNA using the four ribonucleoside triphosphates as substrates. The sequence is that of DNA-directed RNA polymerase subunit alpha from Aster yellows witches'-broom phytoplasma (strain AYWB).